The chain runs to 99 residues: A-type ATP synthase subunit F (99 aa).

This sequence belongs to the V-ATPase F subunit family. Has multiple subunits with at least A(3), B(3), C, D, E, F, H, I and proteolipid K(x).

It is found in the cell membrane. Its function is as follows. Component of the A-type ATP synthase that produces ATP from ADP in the presence of a proton gradient across the membrane. This is A-type ATP synthase subunit F from Methanothrix thermoacetophila (strain DSM 6194 / JCM 14653 / NBRC 101360 / PT) (Methanosaeta thermophila).